Reading from the N-terminus, the 91-residue chain is Small ribosomal subunit protein uS19 (91 aa).

The protein belongs to the universal ribosomal protein uS19 family.

Functionally, protein S19 forms a complex with S13 that binds strongly to the 16S ribosomal RNA. The sequence is that of Small ribosomal subunit protein uS19 from Saccharophagus degradans (strain 2-40 / ATCC 43961 / DSM 17024).